Here is a 358-residue protein sequence, read N- to C-terminus: MGAIHEETANRSPIPDGHQGAGDRAADHRHSARRAGRWPAPGGVCHFAGADQGGGVAGGQSRMGSSRGTAPRGLRASDGGTAGASSVHRQEVGSRRQEETGTQVMKTLVTAIQKGGQGKTFATCHLAFDFLERGLRVAVIDLDTQGNASFTLSAYQSGYLASQLFTGDTDDLRYWFGKREGESLALIAADANLANLDKMELSQAAAALRASVAALGEFFDVCLIDTAPSLGVAMTAAVLTADYMLSPIEMEAYSLQGMKKMVAVISNLRKQNPKLRFLGMVPNKVDARKPRHVNNLATLQQAYPQLILPFSIGARDSIAEALGEQMPVWKIKKTAARKATQEVRALADYVFTKMEIAQ.

Residues M1–G101 are disordered. Residues H88–E99 show a composition bias toward basic and acidic residues.

It belongs to the ParA family.

This is one of the proteins encoded by the trfB operon; it is involved in plasmid maintenance and replication. The chain is Protein IncC (incC) from Escherichia coli.